Consider the following 409-residue polypeptide: Histidinol dehydrogenase homolog (409 aa).

It belongs to the histidinol dehydrogenase family.

This chain is Histidinol dehydrogenase homolog, found in Synechocystis sp. (strain ATCC 27184 / PCC 6803 / Kazusa).